Consider the following 57-residue polypeptide: Sec-independent protein translocase protein TatAy (57 aa).

Residues 1–21 (MPIGPGSLAVIAIVALIIFGP) form a helical membrane-spanning segment.

Belongs to the TatA/E family. Forms a complex with TatCy. Two types of complexes exist: one composed of TatAy and TatCy, and another composed only of TatAy. Cytosolic TatA forms large complexes or aggregates.

The protein resides in the cell membrane. The protein localises to the cytoplasm. Its subcellular location is the cytosol. In terms of biological role, part of the twin-arginine translocation (Tat) system that transports large folded proteins containing a characteristic twin-arginine motif in their signal peptide across membranes. TatA could form the protein-conducting channel of the Tat system. Required for YwbN secretion. This Bacillus subtilis (strain 168) protein is Sec-independent protein translocase protein TatAy.